The chain runs to 239 residues: Myogenic factor 6 (239 aa).

Residues 28 to 59 (PGVSPLYEGNDSPLSPGQDPVPSETGCESSGE) form a disordered region. The 52-residue stretch at 92 to 143 (DRRKAATLRERRRLKKINEAFDALKKKTVPNPNQRLPKVEILRSAINYIEKL) folds into the bHLH domain. Residues 182-196 (CQSWQENPDHSSSQM) are compositionally biased toward polar residues. Residues 182–239 (CQSWQENPDHSSSQMAGHREGAVLESSESSSLRRLSSIVDSISTEEPKARCPSQISEK) form a disordered region. Residues 204–223 (VLESSESSSLRRLSSIVDSI) are compositionally biased toward low complexity.

As to quaternary structure, efficient DNA binding requires dimerization with another bHLH protein.

The protein localises to the nucleus. In terms of biological role, involved in muscle differentiation (myogenic factor). Induces fibroblasts to differentiate into myoblasts. Probable sequence specific DNA-binding protein. In Danio rerio (Zebrafish), this protein is Myogenic factor 6 (myf6).